Consider the following 173-residue polypeptide: Large ribosomal subunit protein uL10 (173 aa).

It belongs to the universal ribosomal protein uL10 family. As to quaternary structure, part of the ribosomal stalk of the 50S ribosomal subunit. The N-terminus interacts with L11 and the large rRNA to form the base of the stalk. The C-terminus forms an elongated spine to which L12 dimers bind in a sequential fashion forming a multimeric L10(L12)X complex.

Forms part of the ribosomal stalk, playing a central role in the interaction of the ribosome with GTP-bound translation factors. In Desulfatibacillum aliphaticivorans, this protein is Large ribosomal subunit protein uL10.